Consider the following 313-residue polypeptide: Sororin-like protein 1 (313 aa).

The FGF motif motif lies at Phe44–Phe46. The segment at Ala105 to Gly287 is disordered. The span at Glu107–Ala118 shows a compositional bias: polar residues. Positions Pro123 to Pro134 are enriched in pro residues. Positions Pro135–Leu154 are enriched in low complexity. A compositionally biased stretch (polar residues) spans Gln155–Pro170. Over residues His184 to Arg196 the composition is skewed to basic residues. Residues Glu249–Ala264 are compositionally biased toward basic and acidic residues. Residues Lys288–Val310 are C-terminal Sororin domain.

It belongs to the sororin family. As to quaternary structure, interacts with Pds5 and Psm3.

It localises to the nucleus. In terms of biological role, regulator of sister chromatid cohesion in mitosis stabilizing cohesin complex association with chromatin. Antagonizes the action of wpl1 which stimulates cohesin dissociation from chromatin. Cohesion ensures that chromosome partitioning is accurate in dividing cells and may play an important role in DNA repair. The protein is Sororin-like protein 1 of Schizosaccharomyces pombe (strain 972 / ATCC 24843) (Fission yeast).